A 438-amino-acid polypeptide reads, in one-letter code: Serine hydroxymethyltransferase (438 aa).

Residues L133 and 137–139 (GHL) contribute to the (6S)-5,6,7,8-tetrahydrofolate site. N6-(pyridoxal phosphate)lysine is present on K242.

Belongs to the SHMT family. Homodimer. The cofactor is pyridoxal 5'-phosphate.

The protein localises to the cytoplasm. It catalyses the reaction (6R)-5,10-methylene-5,6,7,8-tetrahydrofolate + glycine + H2O = (6S)-5,6,7,8-tetrahydrofolate + L-serine. It participates in one-carbon metabolism; tetrahydrofolate interconversion. The protein operates within amino-acid biosynthesis; glycine biosynthesis; glycine from L-serine: step 1/1. Functionally, catalyzes the reversible interconversion of serine and glycine with tetrahydrofolate (THF) serving as the one-carbon carrier. This reaction serves as the major source of one-carbon groups required for the biosynthesis of purines, thymidylate, methionine, and other important biomolecules. Also exhibits THF-independent aldolase activity toward beta-hydroxyamino acids, producing glycine and aldehydes, via a retro-aldol mechanism. In Brucella suis (strain ATCC 23445 / NCTC 10510), this protein is Serine hydroxymethyltransferase.